The sequence spans 196 residues: MNDRHPPSVSTHRHATRMDDRSLIRQTIRTVPDWPSPGVQFRDITPLLQSPKVFRVLIDQFVHRYFDLRPDAIAGLDARGFIIGSVLAYELNIGFVPIRKKGKLPYTTVEESYELEYGSAAVEIHTDAVKAGDRVLLIDDLIATGGTMMAGKRLLERLGATVIEGAAIVDLPELGGAAKLRAAGLPLFTLVSFEGH.

It belongs to the purine/pyrimidine phosphoribosyltransferase family. Homodimer.

It is found in the cytoplasm. It catalyses the reaction AMP + diphosphate = 5-phospho-alpha-D-ribose 1-diphosphate + adenine. It participates in purine metabolism; AMP biosynthesis via salvage pathway; AMP from adenine: step 1/1. In terms of biological role, catalyzes a salvage reaction resulting in the formation of AMP, that is energically less costly than de novo synthesis. The polypeptide is Adenine phosphoribosyltransferase (Methylibium petroleiphilum (strain ATCC BAA-1232 / LMG 22953 / PM1)).